The chain runs to 130 residues: Galectin-2 (130 aa).

The Galectin domain occupies 4–130 (KFEVKDLNMK…GLQISSFKLE (127 aa)). 65-71 (WGQEQRE) lines the a beta-D-galactoside pocket.

Homodimer.

This protein binds beta-galactoside. Its physiological function is not yet known. This chain is Galectin-2 (Lgals2), found in Mus musculus (Mouse).